The primary structure comprises 162 residues: D-aminoacyl-tRNA deacylase (162 aa).

Positions 145–146 match the Gly-cisPro motif, important for rejection of L-amino acids motif; it reads GP.

It belongs to the DTD family. As to quaternary structure, homodimer.

The protein resides in the cytoplasm. It catalyses the reaction glycyl-tRNA(Ala) + H2O = tRNA(Ala) + glycine + H(+). The enzyme catalyses a D-aminoacyl-tRNA + H2O = a tRNA + a D-alpha-amino acid + H(+). Functionally, an aminoacyl-tRNA editing enzyme that deacylates mischarged D-aminoacyl-tRNAs. Also deacylates mischarged glycyl-tRNA(Ala), protecting cells against glycine mischarging by AlaRS. Acts via tRNA-based rather than protein-based catalysis; rejects L-amino acids rather than detecting D-amino acids in the active site. By recycling D-aminoacyl-tRNA to D-amino acids and free tRNA molecules, this enzyme counteracts the toxicity associated with the formation of D-aminoacyl-tRNA entities in vivo and helps enforce protein L-homochirality. This chain is D-aminoacyl-tRNA deacylase, found in Bifidobacterium longum subsp. infantis (strain ATCC 15697 / DSM 20088 / JCM 1222 / NCTC 11817 / S12).